Consider the following 401-residue polypeptide: Chaperone protein DnaJ (401 aa).

The J domain occupies 4–69 (DYYEVLGVSR…DKRRRYDQFG (66 aa)). Residues 156-237 (GVEKTLKIKK…CYGEGIKQGD (82 aa)) form a CR-type zinc finger. Zn(2+) is bound by residues C169, C172, C185, C188, C211, C214, C225, and C228. 4 CXXCXGXG motif repeats span residues 169–176 (CKECNGSG), 185–192 (CQTCHGSG), 211–218 (CPTCGGEG), and 225–232 (CTACYGEG). The interval 377–401 (AFSPSGSNNDKEEKSFFEKARDIFS) is disordered. Residues 385–401 (NDKEEKSFFEKARDIFS) show a composition bias toward basic and acidic residues.

It belongs to the DnaJ family. As to quaternary structure, homodimer. Zn(2+) serves as cofactor.

The protein localises to the cytoplasm. Functionally, participates actively in the response to hyperosmotic and heat shock by preventing the aggregation of stress-denatured proteins and by disaggregating proteins, also in an autonomous, DnaK-independent fashion. Unfolded proteins bind initially to DnaJ; upon interaction with the DnaJ-bound protein, DnaK hydrolyzes its bound ATP, resulting in the formation of a stable complex. GrpE releases ADP from DnaK; ATP binding to DnaK triggers the release of the substrate protein, thus completing the reaction cycle. Several rounds of ATP-dependent interactions between DnaJ, DnaK and GrpE are required for fully efficient folding. Also involved, together with DnaK and GrpE, in the DNA replication of plasmids through activation of initiation proteins. This chain is Chaperone protein DnaJ, found in Chlorobium limicola (strain DSM 245 / NBRC 103803 / 6330).